Consider the following 225-residue polypeptide: Small ribosomal subunit protein uS3 (225 aa).

One can recognise a KH type-2 domain in the interval Leu-38–Arg-106.

Belongs to the universal ribosomal protein uS3 family. As to quaternary structure, part of the 30S ribosomal subunit. Forms a tight complex with proteins S10 and S14.

Binds the lower part of the 30S subunit head. Binds mRNA in the 70S ribosome, positioning it for translation. This is Small ribosomal subunit protein uS3 from Gluconacetobacter diazotrophicus (strain ATCC 49037 / DSM 5601 / CCUG 37298 / CIP 103539 / LMG 7603 / PAl5).